Reading from the N-terminus, the 121-residue chain is Large ribosomal subunit protein bL19 (121 aa).

The protein belongs to the bacterial ribosomal protein bL19 family.

This protein is located at the 30S-50S ribosomal subunit interface and may play a role in the structure and function of the aminoacyl-tRNA binding site. In Porphyromonas gingivalis (strain ATCC BAA-308 / W83), this protein is Large ribosomal subunit protein bL19.